Consider the following 642-residue polypeptide: MANKKYDVIVVGAGHAGIEACLSSARLGLNTLMVTTNTDRIGYMSCNPSIGGLAKGHMVREIDVLGGQMGVAADETCIQYKRLNASKGPAVRGTRVQNDKHLYSQFQKEALYNQPNLEVLQGEVKRLILEKDLCVGVVLQDGSEIFGKATIITTGTFMNGVMHIGLRQEAGGRVGDQPSIGLSDQLAQFGFEVKRLKTGTPARLLKDSIDWSKTIPQAGDEKVYPFSFRSSDKLKLPQVLCYLTRTTEETHDIIRGNLDKSPMYCGIIEGVGPRYCPSIEDKITRFAERTSHQTFLEPEGLSTDLIYLQGISTSLPEDVQDRFLKTIPGLENVKVARYGYAVEYDYIEPTQIWHRLETRTIRQLFLAGQINGTSGYEEAAAQGLIAGINAAHSILGREEFILGRDQAYMGVMIDDLVTKGTREPYRMFTSRAEHRLVLREDNTIDRLSDLGRKLGLVSAESFELLTNLRERRQVLHDRLKNTVLYPTKDIQAILATIPTPAMSKSLTFEELLRRPELTSSHLELLNFELDPDPNVVEPVEIEVKYSGYVKRQMDLIVQSKRLEEMLLPDDLAYAEIRGLSNEEKDKLLRVKPRTLGQAQRISGVNPSAIQAIMIHLKGHKKIKEMGLEGQSGAGSTDSILAH.

FAD is bound by residues 12 to 17 (GAGHAG), V124, and S179. 272 to 286 (GPRYCPSIEDKITRF) is an NAD(+) binding site. Q369 serves as a coordination point for FAD.

The protein belongs to the MnmG family. As to quaternary structure, homodimer. Heterotetramer of two MnmE and two MnmG subunits. Requires FAD as cofactor.

It is found in the cytoplasm. NAD-binding protein involved in the addition of a carboxymethylaminomethyl (cmnm) group at the wobble position (U34) of certain tRNAs, forming tRNA-cmnm(5)s(2)U34. The sequence is that of tRNA uridine 5-carboxymethylaminomethyl modification enzyme MnmG from Bdellovibrio bacteriovorus (strain ATCC 15356 / DSM 50701 / NCIMB 9529 / HD100).